A 463-amino-acid chain; its full sequence is Serine/threonine-protein kinase sgk-1 (463 aa).

The 258-residue stretch at 135 to 392 (FDYLTTIGKG…FRDIRDHPFF (258 aa)) folds into the Protein kinase domain. ATP is bound by residues 141–149 (IGKGSFGRV) and K164. D259 serves as the catalytic Proton acceptor. Positions 393–463 (LPVDWDKLLN…TFVDTNRVLV (71 aa)) constitute an AGC-kinase C-terminal domain.

Belongs to the protein kinase superfamily. AGC Ser/Thr protein kinase family. Interacts with pdk-1, akt-1, akt-2 and daf-16. Part of a complex containing sgk-1, akt-1 and akt-2. Interacts with let-92 phosphatase regulatory subunit pptr-1. Mg(2+) serves as cofactor. As to expression, expressed in late embryos just before hatching. At postembryonic stages, expressed in sensory and motor neurons and in the intestine. Highly expressed in the intestine and head and tail neurons.

It localises to the cytoplasm. The protein resides in the nucleus. The protein localises to the apical cell membrane. It carries out the reaction L-seryl-[protein] + ATP = O-phospho-L-seryl-[protein] + ADP + H(+). It catalyses the reaction L-threonyl-[protein] + ATP = O-phospho-L-threonyl-[protein] + ADP + H(+). Its activity is regulated as follows. Phosphorylated and activated by pdk-1. Acts downstream of PI3 kinase age-1 and kinase pdk-1 in the daf-2/insulin receptor-like transduction pathway. Essential role in regulating development, stress response, and longevity. Phosphorylates Forkhead-related daf-16 and the longevity-promoting skn-1 transcription factors, which inhibits their entry into the nucleus and antagonizes their function. Promotes the cytoplasmic localization of the transcription factor pqm-1. Plays a role in the intracellular trafficking of proteins such as mig-14 to the cell membrane, and this may be through positively regulating ceramide synthesis. Acts downstream of rict-1 to regulate fat storage, size, development and vitellogenesis. Downstream of age-1 and together with akt-1/2, promotes cell survival during embryonic development. Plays a role in maintaining the gonadal basement membrane through antagonizing akt-1 activity. Does not appear to play a role in immune function. The sequence is that of Serine/threonine-protein kinase sgk-1 from Caenorhabditis elegans.